The chain runs to 142 residues: Calmodulin-alpha (142 aa).

A2 is modified (N-acetylalanine). 4 consecutive EF-hand domains span residues 8–43 (EQIAEFKEAFSLFDKDGDGTITTKELGTVMRSLGQN), 44–79 (PTEAELQDMINEVDADGNGTIDFPEFLTMMARKMKD), 81–116 (DSEEEIREAFRVFDKDGNGYISAAELRHVMTNLGEK), and 117–142 (LTDEEVDEMIREADIDGDGQVNYEEF). D21, D23, D25, T27, E32, D57, D59, N61, T63, E68, D94, D96, N98, Y100, and E105 together coordinate Ca(2+). K116 carries the N6,N6,N6-trimethyllysine modification. The Ca(2+) site is built by D130, D132, D134, Q136, and E141.

This sequence belongs to the calmodulin family.

In terms of biological role, calmodulin mediates the control of a large number of enzymes, ion channels and other proteins by Ca(2+). Among the enzymes to be stimulated by the calmodulin-Ca(2+) complex are a number of protein kinases and phosphatases. The polypeptide is Calmodulin-alpha (Arbacia punctulata (Punctuate sea urchin)).